The sequence spans 468 residues: MQPRQPGDEAKQLAELEVVRQMMTPTREVLLELHESFLKELQRGLEMHKRHGITWVPEECSMKMLDSCVSNLPTGAEVGEAYAIDFGGSTCRAVRCSLLGKGKMEIIQDKICLRSAEHRCAKGFMDKKAGGKELFDQFAMCIRGLMDRSGDLKKAEETNTPVPVGFTFSFPCAQAALNSSFLIEWTKGFETGRENPDRVEGKDVAVLLADALQRHNVPAVCKAIVNDTVGTLVSCAYQRVPGTPECRVGLIIGTGFNACYVEPEASNYGYTGTVVNMEAGNFHKDLPRNEIDVEVDEKTHNRGKQQFEKLVSGYYIGEIVRVAAVRVFGARAPEKASVRHSIHGETASTIRDDHSQDKAASIQAIKECWGVTMDLDDIKCIWEICRLVFDRSAAFAATLAVALCYRTGRLDTGSTVGIDGALYVKNQWYREAVEYYTKLVAGDAAKNIHYCIADDGSGKGAALIADVN.

Positions 10–466 (AKQLAELEVV…SGKGAALIAD (457 aa)) constitute a Hexokinase domain. A hexokinase small subdomain region spans residues 74–225 (TGAEVGEAYA…NVPAVCKAIV (152 aa)). Residue 85 to 90 (DFGGST) coordinates ATP. A glucose-binding region spans residues 163–189 (PVGFTFSFPCAQAALNSSFLIEWTKGF). The hexokinase large subdomain stretch occupies residues 226-455 (NDTVGTLVSC…KNIHYCIADD (230 aa)).

It belongs to the hexokinase family.

The enzyme catalyses a D-hexose + ATP = a D-hexose 6-phosphate + ADP + H(+). It carries out the reaction D-mannose + ATP = D-mannose 6-phosphate + ADP + H(+). The catalysed reaction is D-fructose + ATP = D-fructose 6-phosphate + ADP + H(+). It catalyses the reaction D-glucose + ATP = D-glucose 6-phosphate + ADP + H(+). The protein operates within carbohydrate metabolism; hexose metabolism. Its pathway is carbohydrate degradation; glycolysis; D-glyceraldehyde 3-phosphate and glycerone phosphate from D-glucose: step 1/4. Functionally, catalyzes the phosphorylation of various hexoses to hexose 6-phosphate. The protein is Hexokinase (HXK) of Toxoplasma gondii.